Here is a 159-residue protein sequence, read N- to C-terminus: MPRKGPVKPREIMPDPIYRDVLVHKLINKVMVDGKKSKAEKIVYGAMQILAEKTGEQPLEALHKAIENLKPILEVRPRRVGGATYQVPMEVPPRRQISLALRWLVEAARNRSGRGNYTMLEKLSNELLDAYHNRGNAIKKREDTHRMAEANKAFAHYKW.

Belongs to the universal ribosomal protein uS7 family. In terms of assembly, part of the 30S ribosomal subunit. Contacts proteins S9 and S11.

Its function is as follows. One of the primary rRNA binding proteins, it binds directly to 16S rRNA where it nucleates assembly of the head domain of the 30S subunit. Is located at the subunit interface close to the decoding center, probably blocks exit of the E-site tRNA. The sequence is that of Small ribosomal subunit protein uS7 from Sulfurihydrogenibium sp. (strain YO3AOP1).